A 326-amino-acid polypeptide reads, in one-letter code: NADH-quinone oxidoreductase subunit H (326 aa).

The next 8 membrane-spanning stretches (helical) occupy residues 11–31 (ILLSILKAVVILLVVVSCGAF), 81–101 (VIFTLAPMIAFTSLLLAFAIV), 114–134 (IGILFFLMMAGLGVYAVLFAG), 154–174 (LSYEVFLGLSLMGVVAQAGSF), 186–206 (LWNVIPQFFGFITFAIAGVAV), 237–257 (FFVGEYIGIVTVSALIVTLFF), 265–285 (LPPFIWFALKTAFFMMMFILI), and 302–322 (WKVCLPLTLINLLVTAAVILW).

The protein belongs to the complex I subunit 1 family. As to quaternary structure, NDH-1 is composed of 13 different subunits. Subunits NuoA, H, J, K, L, M, N constitute the membrane sector of the complex.

It localises to the cell inner membrane. The catalysed reaction is a quinone + NADH + 5 H(+)(in) = a quinol + NAD(+) + 4 H(+)(out). Functionally, NDH-1 shuttles electrons from NADH, via FMN and iron-sulfur (Fe-S) centers, to quinones in the respiratory chain. The immediate electron acceptor for the enzyme in this species is believed to be ubiquinone. Couples the redox reaction to proton translocation (for every two electrons transferred, four hydrogen ions are translocated across the cytoplasmic membrane), and thus conserves the redox energy in a proton gradient. This subunit may bind ubiquinone. The polypeptide is NADH-quinone oxidoreductase subunit H (Cronobacter sakazakii (strain ATCC BAA-894) (Enterobacter sakazakii)).